A 281-amino-acid polypeptide reads, in one-letter code: Sulfur carrier protein FdhD (281 aa).

Cys117 (cysteine persulfide intermediate) is an active-site residue.

Belongs to the FdhD family.

It localises to the cytoplasm. Its function is as follows. Required for formate dehydrogenase (FDH) activity. Acts as a sulfur carrier protein that transfers sulfur from IscS to the molybdenum cofactor prior to its insertion into FDH. The sequence is that of Sulfur carrier protein FdhD from Xanthomonas axonopodis pv. citri (strain 306).